We begin with the raw amino-acid sequence, 592 residues long: AT-rich interactive domain-containing protein 5A (592 aa).

Positions 1–53 (MAPPVKGKRKQSEEGEPLDPPVSPQPDGEPRSRSPVRLEEPPEAGREREEEQE) are disordered. An interaction with SOX9 region spans residues 1-299 (MAPPVKGKRK…AAPPLESPQS (299 aa)). A Phosphoserine modification is found at S23. Over residues 28–49 (GEPRSRSPVRLEEPPEAGRERE) the composition is skewed to basic and acidic residues. The 93-residue stretch at 52–144 (QEEEQAFLVS…LVLPYVRHLK (93 aa)) folds into the ARID domain. Glycyl lysine isopeptide (Lys-Gly) (interchain with G-Cter in ubiquitin) cross-links involve residues K82 and K91. The tract at residues 143–225 (LKGEDDKPLP…RGPAAGPSLP (83 aa)) is disordered. Basic and acidic residues predominate over residues 162 to 186 (MAKEPRGDDGATERPKKVKEEKRVD). S253 carries the post-translational modification Phosphoserine. Residues 277–333 (CRHGAGGEPQAPPAAPPLESPQSPGGPAEDSRHRLTPLEGRQAPGGGLWGETQAGPR) form a disordered region. Residues 286–295 (QAPPAAPPLE) are compositionally biased toward pro residues. S438 and S463 each carry phosphoserine.

Interacts with SOX9. Interacts with ESR1. Interacts with RORC. In terms of processing, phosphorylated by MAPK14 on serine residues involving a TLR4 signaling pathway upon lipopolysaccharide (LPS) stimulation leading to its ubiquitination and proteasomal degradation. Ubiquitinated leading to proteasomal degradation; involving WWP1 linked to MAPK14-mediated phosphorylation upon LPS stimulation.

Its subcellular location is the nucleus. In terms of biological role, DNA-binding protein that may regulate transcription and act as a repressor by binding to AT-rich stretches in the promoter region of target genes. May act as repressor and down-regulate enhancer-dependent gene expressison. May positively regulate chondrocyte-specific transcription such as of COL2A1 in collaboration with SOX9 and positively regulate histone H3 acetylation at chondrocyte-specific genes. May stimulate early-stage chondrocyte differentiation and inhibit later stage differention. Can repress ESR1-mediated transcriptional activation; proposed to act as corepressor for selective nuclear hormone receptors. As an RNA-binding protein, involved in the regulation of inflammatory response by stabilizing selective inflammation-related mRNAs, such as STAT3 and TBX21. Also stabilizes IL6 mRNA. Binds to stem loop structures located in the 3'UTRs of IL6, STAT3 and TBX21 mRNAs; at least for STAT3 prevents binding of ZC3H12A to the mRNA stem loop structure thus inhibiting its degradation activity. Contributes to elevated IL6 levels possibly implicated in autoimmunity processes. IL6-dependent stabilization of STAT3 mRNA may promote differentiation of naive CD4+ T-cells into T-helper Th17 cells. In CD4+ T-cells may also inhibit RORC-induced Th17 cell differentiation independently of IL6 signaling. Stabilization of TBX21 mRNA contributes to elevated interferon-gamma secretion in Th1 cells possibly implicated in the establishment of septic shock. Stabilizes TNFRSF4/OX40 mRNA by binding to the conserved stem loop structure in its 3'UTR; thereby competing with the mRNA-destabilizing functions of RC3H1 and endoribonuclease ZC3H12A. This is AT-rich interactive domain-containing protein 5A (ARID5A) from Bos taurus (Bovine).